Reading from the N-terminus, the 942-residue chain is Protein O-mannosyl-transferase TMTC1 (942 aa).

At 1–20 (MLVTRGDRGGGERAPSRRPR) the chain is on the cytoplasmic side. Residues 21 to 41 (CGLVPAGAAALLAGASCLCYG) traverse the membrane as a helical segment. Over 42 to 109 (RSLRGEFVHD…RLNIFLTGMN (68 aa)) the chain is Extracellular. A helical transmembrane segment spans residues 110 to 130 (PFYFHAVNVILHCLVTLVLMY). At 131 to 140 (TCDKTVFKNR) the chain is on the cytoplasmic side. A helical transmembrane segment spans residues 141 to 157 (GLAFVTALLFAVHPVHT). Residues 158–159 (EA) are Extracellular-facing. A helical membrane pass occupies residues 160–180 (VAGIVGRADVLACLLFLLAFL). Residues 181 to 196 (SYQRSLDQGCAGQCFP) lie on the Cytoplasmic side of the membrane. Residues 197–217 (TTASPFFLLLSLFLGTCAMLV) traverse the membrane as a helical segment. Topologically, residues 218 to 331 (KETGITVFGV…LLTLRPFLKR (114 aa)) are extracellular. A disordered region spans residues 245–285 (NGAVCQHSSGQPGSPQPSSQQAHPHRESRKQRFPHKDSWGG). Residues 250-266 (QHSSGQPGSPQPSSQQA) show a composition bias toward low complexity. The chain crosses the membrane as a helical span at residues 332-352 (AILVISYVTVILYFRLWIMGG). Residues 353 to 373 (TMPLFSEQDNPASFSPYILTR) are Cytoplasmic-facing. Residues 374 to 394 (FLTYSYLLAFNVWLLLAPITL) traverse the membrane as a helical segment. At 395–414 (CYDWQVGSIPLVETIWDVRN) the chain is on the extracellular side. A helical transmembrane segment spans residues 415-435 (LATILLAVVMALLSLHCVAAF). The Cytoplasmic portion of the chain corresponds to 436–441 (KRLEHK). Residues 442-462 (EVLAGLLFLVFPFIPASNLFF) traverse the membrane as a helical segment. Residue Arg-463 is a topological domain, extracellular. A helical membrane pass occupies residues 464–484 (VGFVVAERVLYMPSMGYCILF). The Cytoplasmic portion of the chain corresponds to 485–498 (VHGLSKLCAGLSRC). The helical transmembrane segment at 499–519 (GATSLMASTVLLLLLFSWKTV) threads the bilayer. At 520–942 (KQNEIWLSRE…LQEVRERDQT (423 aa)) the chain is on the extracellular side. TPR repeat units lie at residues 543–576 (AKVH…YPRH), 577–607 (ASAL…HPQH), 608–641 (NRAL…GPDF), 642–675 (ADAY…CPDS), 676–709 (SDLH…SPSH), 710–742 (HVAV…VART), 743–776 (AEVL…QPSQ), 777–810 (RELR…EPRC), 811–844 (LECY…KPKD), 849–882 (SELF…DPDQ), and 883–916 (AQAW…VPDS).

It belongs to the TMTC family. As to quaternary structure, may interact with FAM168B.

It localises to the membrane. Its subcellular location is the endoplasmic reticulum. The enzyme catalyses a di-trans,poly-cis-dolichyl beta-D-mannosyl phosphate + L-seryl-[protein] = 3-O-(alpha-D-mannosyl)-L-seryl-[protein] + a di-trans,poly-cis-dolichyl phosphate + H(+). It carries out the reaction a di-trans,poly-cis-dolichyl beta-D-mannosyl phosphate + L-threonyl-[protein] = 3-O-(alpha-D-mannosyl)-L-threonyl-[protein] + a di-trans,poly-cis-dolichyl phosphate + H(+). It participates in protein modification; protein glycosylation. Its function is as follows. Transfers mannosyl residues to the hydroxyl group of serine or threonine residues. The 4 members of the TMTC family are O-mannosyl-transferases dedicated primarily to the cadherin superfamily, each member seems to have a distinct role in decorating the cadherin domains with O-linked mannose glycans at specific regions. Also acts as O-mannosyl-transferase on other proteins such as PDIA3. The polypeptide is Protein O-mannosyl-transferase TMTC1 (Mus musculus (Mouse)).